Here is a 429-residue protein sequence, read N- to C-terminus: WRKY transcription factor 44 (429 aa).

The WRKY 1 DNA-binding region spans 159-223 (TGDRSSVDGY…YQGEHNHSKP (65 aa)). Cysteine 190, cysteine 195, histidine 218, and histidine 220 together coordinate Zn(2+). 2 disordered regions span residues 214–279 (YQGE…RTEK) and 292–348 (AVPR…SDSL). Composition is skewed to polar residues over residues 254-275 (QDPNNNLYSPLWNNQSNDSTQN), 295-313 (RSTNSNPGTSDSGCKSSQC), and 334-345 (SEAGVSQGSVES). Positions 343–408 (VESDSLEDGF…YEGKHNHHLL (66 aa)) form a DNA-binding region, WRKY 2. Positions 374, 379, 403, and 405 each coordinate Zn(2+). Positions 410-422 (SPPSSSTLPFNSP) are enriched in low complexity. Positions 410–429 (SPPSSSTLPFNSPQLSKQTI) are disordered.

This sequence belongs to the WRKY group I family. As to expression, leaf promordia, trichomes, atrichoblasts, fertilized eggs, seed coat.

The protein localises to the nucleus. Its function is as follows. Transcription factor. Interacts specifically with the W box (5'-(T)TGAC[CT]-3'), a frequently occurring elicitor-responsive cis-acting element. Regulates trichome development, production of mucilage and tannin in seed coats, and maybe root hair development. In Arabidopsis thaliana (Mouse-ear cress), this protein is WRKY transcription factor 44 (WRKY44).